The sequence spans 365 residues: MEIKTQLRGLPPYQPGKSIEEVKREYGLTDIIKLASNENPYGCSPAVKEAVMKQLDHLAIYPDGYARLLREKVATHLGVNETQLIFGNGSDEVVQIICRAFLSPNTNTVMAAPTFPQYRHNAVIEGAEIREIPLVDGRHDLEAMLNAIDEQTRVVWICNPNNPTGTYVNEQELTSFLERVPSHVLAVLDEAYYEYATANDYPQTVPLLRQYDNLMILRTFSKAYGLAALRVGYGIASETLIREIEPAREPFNTSSVAQAAAIAALDDQAFIRECVEKNKQGLETFYRFCEENGLRYYPSQANFILIDFGIEGNEVFQYLLERGIIVRSGNALGFPTSVRITVGSKEQNERIIHALTQMLKEKQLI.

At K222 the chain carries N6-(pyridoxal phosphate)lysine.

This sequence belongs to the class-II pyridoxal-phosphate-dependent aminotransferase family. Histidinol-phosphate aminotransferase subfamily. Homodimer. Pyridoxal 5'-phosphate serves as cofactor.

It carries out the reaction L-histidinol phosphate + 2-oxoglutarate = 3-(imidazol-4-yl)-2-oxopropyl phosphate + L-glutamate. It functions in the pathway amino-acid biosynthesis; L-histidine biosynthesis; L-histidine from 5-phospho-alpha-D-ribose 1-diphosphate: step 7/9. In Geobacillus sp. (strain WCH70), this protein is Histidinol-phosphate aminotransferase.